We begin with the raw amino-acid sequence, 292 residues long: 33 kDa chaperonin (292 aa).

2 disulfide bridges follow: Cys236–Cys238 and Cys269–Cys272.

The protein belongs to the HSP33 family. Under oxidizing conditions two disulfide bonds are formed involving the reactive cysteines. Under reducing conditions zinc is bound to the reactive cysteines and the protein is inactive.

It is found in the cytoplasm. Functionally, redox regulated molecular chaperone. Protects both thermally unfolding and oxidatively damaged proteins from irreversible aggregation. Plays an important role in the bacterial defense system toward oxidative stress. This Ruminiclostridium cellulolyticum (strain ATCC 35319 / DSM 5812 / JCM 6584 / H10) (Clostridium cellulolyticum) protein is 33 kDa chaperonin.